A 380-amino-acid chain; its full sequence is Cytochrome b (380 aa).

4 consecutive transmembrane segments (helical) span residues 33 to 53 (FGSLLGLCLITQILTGLFLAM), 77 to 98 (WLIRNIHANGASFFFICIYLHI), 113 to 133 (WNVGVILLLLVMMTAFVGYVL), and 178 to 198 (FFAFHFLFPFVIAAATVIHLI). 2 residues coordinate heme b: His83 and His97. Positions 182 and 196 each coordinate heme b. Residue His201 participates in a ubiquinone binding. The next 4 membrane-spanning stretches (helical) occupy residues 226 to 246 (YKDLLGFAALLIALAALALFS), 288 to 308 (LGGVLALLFSILILMLVPILH), 320 to 340 (FSQFLFWSLVADVMILTWIGG), and 347 to 367 (FVIIGQVASFLYFFLFLVMIP).

It belongs to the cytochrome b family. The cytochrome bc1 complex contains 3 respiratory subunits (MT-CYB, CYC1 and UQCRFS1), 2 core proteins (UQCRC1 and UQCRC2) and probably 6 low-molecular weight proteins. Requires heme b as cofactor.

The protein localises to the mitochondrion inner membrane. In terms of biological role, component of the ubiquinol-cytochrome c reductase complex (complex III or cytochrome b-c1 complex) that is part of the mitochondrial respiratory chain. The b-c1 complex mediates electron transfer from ubiquinol to cytochrome c. Contributes to the generation of a proton gradient across the mitochondrial membrane that is then used for ATP synthesis. This Paralichthys olivaceus (Bastard halibut) protein is Cytochrome b (mt-cyb).